A 465-amino-acid chain; its full sequence is Argininosuccinate lyase (465 aa).

The protein belongs to the lyase 1 family. Argininosuccinate lyase subfamily.

The protein localises to the cytoplasm. It catalyses the reaction 2-(N(omega)-L-arginino)succinate = fumarate + L-arginine. Its pathway is amino-acid biosynthesis; L-arginine biosynthesis; L-arginine from L-ornithine and carbamoyl phosphate: step 3/3. In Rhodopseudomonas palustris (strain BisB18), this protein is Argininosuccinate lyase.